Here is a 452-residue protein sequence, read N- to C-terminus: tRNA modification GTPase MnmE (452 aa).

The (6S)-5-formyl-5,6,7,8-tetrahydrofolate site is built by arginine 22, glutamate 80, and lysine 119. Residues 213–375 (GVRTVIVGKP…LENKIYEKFF (163 aa)) form the TrmE-type G domain. Asparagine 223 is a K(+) binding site. GTP is bound by residues 223–228 (NSGKST), 242–248 (TDIPGTT), and 267–270 (DTAG). Serine 227 lines the Mg(2+) pocket. Threonine 242, isoleucine 244, and threonine 247 together coordinate K(+). Threonine 248 lines the Mg(2+) pocket. Lysine 452 contributes to the (6S)-5-formyl-5,6,7,8-tetrahydrofolate binding site.

It belongs to the TRAFAC class TrmE-Era-EngA-EngB-Septin-like GTPase superfamily. TrmE GTPase family. As to quaternary structure, homodimer. Heterotetramer of two MnmE and two MnmG subunits. It depends on K(+) as a cofactor.

The protein localises to the cytoplasm. Functionally, exhibits a very high intrinsic GTPase hydrolysis rate. Involved in the addition of a carboxymethylaminomethyl (cmnm) group at the wobble position (U34) of certain tRNAs, forming tRNA-cmnm(5)s(2)U34. The protein is tRNA modification GTPase MnmE of Petrotoga mobilis (strain DSM 10674 / SJ95).